A 236-amino-acid polypeptide reads, in one-letter code: Carbonyl reductase family member 4 (236 aa).

NADP(+)-binding positions include 11 to 14, 34 to 35, Asp-55, and 82 to 84; these read SRGI, RN, and SAG. Ser-134 is a substrate binding site. NADP(+)-binding positions include Tyr-147, Lys-151, and 180–182; that span reads IRT. Tyr-147 serves as the catalytic Proton acceptor.

The protein belongs to the short-chain dehydrogenases/reductases (SDR) family. As to quaternary structure, homotetramer (in vitro). Heterotetramer with HSD17B8; contains two molecules each of HSD17B8 and CBR4.

It is found in the mitochondrion matrix. Its pathway is lipid metabolism; fatty acid biosynthesis. In terms of biological role, the heterotetramer with HSD17B8 has NADH-dependent 3-ketoacyl-acyl carrier protein reductase activity, and thereby plays a role in mitochondrial fatty acid biosynthesis. Within the heterotetramer, HSD17B8 binds NADH; CBR4 binds NADPD. The homotetramer has NADPH-dependent quinone reductase activity. Both homotetramer and the heterotetramer have broad in vitro substrate specificity and can reduce 9,10-phenanthrenequinone, 1,4-benzoquinone and various other o-quinones and p-quinones. The polypeptide is Carbonyl reductase family member 4 (cbr4) (Xenopus laevis (African clawed frog)).